Consider the following 278-residue polypeptide: 4-diphosphocytidyl-2-C-methyl-D-erythritol kinase (278 aa).

Residue Lys9 is part of the active site. 89–99 (PVASGIGGGSA) contributes to the ATP binding site. Residue Asp128 is part of the active site.

It belongs to the GHMP kinase family. IspE subfamily.

It catalyses the reaction 4-CDP-2-C-methyl-D-erythritol + ATP = 4-CDP-2-C-methyl-D-erythritol 2-phosphate + ADP + H(+). Its pathway is isoprenoid biosynthesis; isopentenyl diphosphate biosynthesis via DXP pathway; isopentenyl diphosphate from 1-deoxy-D-xylulose 5-phosphate: step 3/6. Its function is as follows. Catalyzes the phosphorylation of the position 2 hydroxy group of 4-diphosphocytidyl-2C-methyl-D-erythritol. The polypeptide is 4-diphosphocytidyl-2-C-methyl-D-erythritol kinase (Cereibacter sphaeroides (strain KD131 / KCTC 12085) (Rhodobacter sphaeroides)).